Reading from the N-terminus, the 31-residue chain is Mycofactocin precursor peptide (31 aa).

This sequence belongs to the mycofactocin precursor peptide family. Post-translationally, the post-translational modifications that lead to mycofactocin involve oxidative decarboxylation of the C-terminal tyrosine residue catalyzed by MftC, introduction of a tyramine-valine cross-link, removal of the modified C-terminal dipeptide by MftE. The released dipeptide then undergoes oxidative deamination by MftD, glycosylation by MftF and methylation by an unknown enzyme.

Its function is as follows. Precursor peptide that leads to mycofactocin (MFT) after extensive post-translational modifications by enzymes encoded by adjacent genes. Mycofactocin acts as a redox cofactor of nicotinamide-dependent oxidoreductases encoded in the same locus. Is required for the in vivo ethanol assimilation in M.smegmatis. The protein is Mycofactocin precursor peptide of Mycolicibacterium smegmatis (strain ATCC 700084 / mc(2)155) (Mycobacterium smegmatis).